The sequence spans 109 residues: Archaeosine synthase (109 aa).

Catalysis depends on Cys21, which acts as the Thioimide intermediate. Residue Asp28 is the Proton donor/acceptor of the active site. Substrate is bound by residues Asp28, 43–46 (LAIE), and 62–63 (HE).

This sequence belongs to the archaeosine synthase type 2 family. In terms of assembly, forms a symmetric tunnel-fold (T-fold) homodecamer of two head-to-head facing pentameric subunits, with 10 active sites at the intermonomer interfaces.

The enzyme catalyses 7-cyano-7-carbaguanosine(15) in tRNA + NH4(+) = archaeosine(15) in tRNA. It participates in tRNA modification; archaeosine-tRNA biosynthesis. Its function is as follows. Is responsible for the final step in the biosynthesis of archaeosine, a modified nucleoside present in the dihydrouridine loop (D-loop) of archaeal tRNA. Catalyzes the conversion of 7-cyano-7-deazaguanine (preQ0)-modified tRNA to archaeosine-tRNA, transforming a nitrile group to a formamidine group. Can use neither glutamine nor asparagine as amino donor in vitro, is only able to utilize free ammonium. However, the enzyme might function in vivo with a partner that serves to generate ammonium. This Pyrobaculum calidifontis (strain DSM 21063 / JCM 11548 / VA1) protein is Archaeosine synthase.